Reading from the N-terminus, the 234-residue chain is Large ribosomal subunit protein uL1 (234 aa).

Belongs to the universal ribosomal protein uL1 family. In terms of assembly, part of the 50S ribosomal subunit.

Binds directly to 23S rRNA. The L1 stalk is quite mobile in the ribosome, and is involved in E site tRNA release. Functionally, protein L1 is also a translational repressor protein, it controls the translation of the L11 operon by binding to its mRNA. In Tolumonas auensis (strain DSM 9187 / NBRC 110442 / TA 4), this protein is Large ribosomal subunit protein uL1.